The chain runs to 512 residues: Cytochrome P450 1A2 (512 aa).

S65 carries an O-linked (GlcNAc) serine glycan. F222 serves as a coordination point for substrate. C454 lines the heme pocket.

This sequence belongs to the cytochrome P450 family. As to quaternary structure, interacts with PGRMC1; the interaction requires PGRMC1 homodimerization. Heme serves as cofactor.

The protein resides in the endoplasmic reticulum membrane. The protein localises to the microsome membrane. The catalysed reaction is an organic molecule + reduced [NADPH--hemoprotein reductase] + O2 = an alcohol + oxidized [NADPH--hemoprotein reductase] + H2O + H(+). It carries out the reaction 17beta-estradiol + reduced [NADPH--hemoprotein reductase] + O2 = 2-hydroxy-17beta-estradiol + oxidized [NADPH--hemoprotein reductase] + H2O + H(+). The enzyme catalyses 17beta-estradiol + reduced [NADPH--hemoprotein reductase] + O2 = 4-hydroxy-17beta-estradiol + oxidized [NADPH--hemoprotein reductase] + H2O + H(+). It catalyses the reaction estrone + reduced [NADPH--hemoprotein reductase] + O2 = 2-hydroxyestrone + oxidized [NADPH--hemoprotein reductase] + H2O + H(+). The catalysed reaction is estrone + reduced [NADPH--hemoprotein reductase] + O2 = 4-hydroxyestrone + oxidized [NADPH--hemoprotein reductase] + H2O + H(+). It carries out the reaction cholesterol + reduced [NADPH--hemoprotein reductase] + O2 = 25-hydroxycholesterol + oxidized [NADPH--hemoprotein reductase] + H2O + H(+). The enzyme catalyses all-trans-retinol + reduced [NADPH--hemoprotein reductase] + O2 = all-trans-retinal + oxidized [NADPH--hemoprotein reductase] + 2 H2O + H(+). It catalyses the reaction all-trans-retinal + reduced [NADPH--hemoprotein reductase] + O2 = all-trans-retinoate + oxidized [NADPH--hemoprotein reductase] + H2O + 2 H(+). The catalysed reaction is (5Z,8Z,11Z,14Z)-eicosatetraenoate + reduced [NADPH--hemoprotein reductase] + O2 = (14R,15S)-epoxy-(5Z,8Z,11Z)-eicosatrienoate + oxidized [NADPH--hemoprotein reductase] + H2O + H(+). It carries out the reaction (5Z,8Z,11Z,14Z)-eicosatetraenoate + reduced [NADPH--hemoprotein reductase] + O2 = (14S,15R)-epoxy-(5Z,8Z,11Z)-eicosatrienoate + oxidized [NADPH--hemoprotein reductase] + H2O + H(+). The enzyme catalyses (5Z,8Z,11Z,14Z,17Z)-eicosapentaenoate + reduced [NADPH--hemoprotein reductase] + O2 = (17R,18S)-epoxy-(5Z,8Z,11Z,14Z)-eicosatetraenoate + oxidized [NADPH--hemoprotein reductase] + H2O + H(+). It catalyses the reaction (4Z,7Z,10Z,13Z,16Z,19Z)-docosahexaenoate + reduced [NADPH--hemoprotein reductase] + O2 = (19R,20S)-epoxy-(4Z,7Z,10Z,13Z,16Z)-docosapentaenoate + oxidized [NADPH--hemoprotein reductase] + H2O + H(+). The catalysed reaction is (5S)-hydroperoxy-(6E,8Z,11Z,14Z)-eicosatetraenoate = 5-oxo-(6E,8Z,11Z,14Z)-eicosatetraenoate + H2O. It carries out the reaction (12S)-hydroperoxy-(5Z,8Z,10E,14Z)-eicosatetraenoate = 12-oxo-(5Z,8Z,10E,14Z)-eicosatetraenoate + H2O. The enzyme catalyses (15S)-hydroperoxy-(5Z,8Z,11Z,13E)-eicosatetraenoate = 15-oxo-(5Z,8Z,11Z,13E)-eicosatetraenoate + H2O. It catalyses the reaction (13S)-hydroperoxy-(9Z,11E)-octadecadienoate = 13-oxo-(9Z,11E)-octadecadienoate + H2O. The catalysed reaction is (5Z,8Z,11Z,14Z)-eicosatetraenoate + reduced [NADPH--hemoprotein reductase] + O2 = 13-hydroxy-(5Z,8Z,11Z,14Z)-eicosatetraenoate + oxidized [NADPH--hemoprotein reductase] + H2O + H(+). It carries out the reaction (5Z,8Z,11Z,14Z)-eicosatetraenoate + reduced [NADPH--hemoprotein reductase] + O2 = 19-hydroxy-(5Z,8Z,11Z,14Z)-eicosatetraenoate + oxidized [NADPH--hemoprotein reductase] + H2O + H(+). The enzyme catalyses (9Z,12Z)-octadecadienoate + reduced [NADPH--hemoprotein reductase] + O2 = 11-hydroxy-(9Z,12Z)-octadecadienoate + oxidized [NADPH--hemoprotein reductase] + H2O + H(+). It functions in the pathway cofactor metabolism; retinol metabolism. The protein operates within steroid metabolism; cholesterol metabolism. It participates in lipid metabolism; arachidonate metabolism. Its function is as follows. A cytochrome P450 monooxygenase involved in the metabolism of various endogenous substrates, including fatty acids, steroid hormones and vitamins. Mechanistically, uses molecular oxygen inserting one oxygen atom into a substrate, and reducing the second into a water molecule, with two electrons provided by NADPH via cytochrome P450 reductase (NADPH--hemoprotein reductase). Catalyzes the hydroxylation of carbon-hydrogen bonds. Exhibits high catalytic activity for the formation of hydroxyestrogens from estrone (E1) and 17beta-estradiol (E2), namely 2-hydroxy E1 and E2. Metabolizes cholesterol toward 25-hydroxycholesterol, a physiological regulator of cellular cholesterol homeostasis. May act as a major enzyme for all-trans retinoic acid biosynthesis in the liver. Catalyzes two successive oxidative transformation of all-trans retinol to all-trans retinal and then to the active form all-trans retinoic acid. Primarily catalyzes stereoselective epoxidation of the last double bond of polyunsaturated fatty acids (PUFA), displaying a strong preference for the (R,S) stereoisomer. Catalyzes bisallylic hydroxylation and omega-1 hydroxylation of PUFA. May also participate in eicosanoids metabolism by converting hydroperoxide species into oxo metabolites (lipoxygenase-like reaction, NADPH-independent). Plays a role in the oxidative metabolism of xenobiotics. Catalyzes the N-hydroxylation of heterocyclic amines and the O-deethylation of phenacetin. Metabolizes caffeine via N3-demethylation. The chain is Cytochrome P450 1A2 (CYP1A2) from Felis catus (Cat).